The chain runs to 431 residues: Adenylosuccinate synthetase (431 aa).

GTP is bound by residues 12–18 and 40–42; these read GDEGKGK and GHT. Catalysis depends on Asp-13, which acts as the Proton acceptor. 2 residues coordinate Mg(2+): Asp-13 and Gly-40. IMP contacts are provided by residues 13-16, 38-41, Thr-130, Arg-144, Gln-225, Thr-240, and Arg-304; these read DEGK and NAGH. The active-site Proton donor is His-41. A substrate-binding site is contributed by 300 to 306; it reads STTGRPR. GTP is bound by residues Arg-306, 332–334, and 414–416; these read KMD and SIG.

This sequence belongs to the adenylosuccinate synthetase family. Homodimer. Requires Mg(2+) as cofactor.

The protein localises to the cytoplasm. The enzyme catalyses IMP + L-aspartate + GTP = N(6)-(1,2-dicarboxyethyl)-AMP + GDP + phosphate + 2 H(+). The protein operates within purine metabolism; AMP biosynthesis via de novo pathway; AMP from IMP: step 1/2. In terms of biological role, plays an important role in the de novo pathway of purine nucleotide biosynthesis. Catalyzes the first committed step in the biosynthesis of AMP from IMP. In Syntrophotalea carbinolica (strain DSM 2380 / NBRC 103641 / GraBd1) (Pelobacter carbinolicus), this protein is Adenylosuccinate synthetase.